The chain runs to 209 residues: N-(5'-phosphoribosyl)anthranilate isomerase (209 aa).

Belongs to the TrpF family.

The catalysed reaction is N-(5-phospho-beta-D-ribosyl)anthranilate = 1-(2-carboxyphenylamino)-1-deoxy-D-ribulose 5-phosphate. It participates in amino-acid biosynthesis; L-tryptophan biosynthesis; L-tryptophan from chorismate: step 3/5. The chain is N-(5'-phosphoribosyl)anthranilate isomerase from Granulibacter bethesdensis (strain ATCC BAA-1260 / CGDNIH1).